The sequence spans 802 residues: Leucine--tRNA ligase (802 aa).

A 'HIGH' region motif is present at residues 40–51; the sequence is PYPSGAGLHVGH. The 'KMSKS' region signature appears at 576–580; it reads KMSKS. Lys-579 serves as a coordination point for ATP.

It belongs to the class-I aminoacyl-tRNA synthetase family.

The protein resides in the cytoplasm. The enzyme catalyses tRNA(Leu) + L-leucine + ATP = L-leucyl-tRNA(Leu) + AMP + diphosphate. The sequence is that of Leucine--tRNA ligase from Bacillus cereus (strain B4264).